An 87-amino-acid chain; its full sequence is Small ribosomal subunit protein bS20 (87 aa).

Residues 1 to 26 (MANIKSAQKRAVQSEKRRQHNASQRS) are disordered.

This sequence belongs to the bacterial ribosomal protein bS20 family.

Functionally, binds directly to 16S ribosomal RNA. The polypeptide is Small ribosomal subunit protein bS20 (Glaesserella parasuis serovar 5 (strain SH0165) (Haemophilus parasuis)).